The primary structure comprises 636 residues: Probable potassium transport system protein Kup (636 aa).

A run of 12 helical transmembrane segments spans residues 23-43, 57-77, 111-131, 148-168, 179-199, 217-237, 258-278, 287-307, 348-368, 377-397, 409-429, and 431-451; these read MALM…SPLY, PAHV…VVSL, WLLI…SMIT, HTLE…LFAI, LFGP…GYQI, FIAE…LALT, WFAM…ALLL, PFFL…ATVA, IYLP…VLLF, AYGF…FAVL, WMVL…ANIF, and IHEG…LMMT.

Belongs to the HAK/KUP transporter (TC 2.A.72) family.

Its subcellular location is the cell inner membrane. It carries out the reaction K(+)(in) + H(+)(in) = K(+)(out) + H(+)(out). Its function is as follows. Transport of potassium into the cell. Likely operates as a K(+):H(+) symporter. The polypeptide is Probable potassium transport system protein Kup (Bordetella bronchiseptica (strain ATCC BAA-588 / NCTC 13252 / RB50) (Alcaligenes bronchisepticus)).